Reading from the N-terminus, the 209-residue chain is Large ribosomal subunit protein uL3 (209 aa).

Gln-150 is modified (N5-methylglutamine).

Belongs to the universal ribosomal protein uL3 family. As to quaternary structure, part of the 50S ribosomal subunit. Forms a cluster with proteins L14 and L19. In terms of processing, methylated by PrmB.

In terms of biological role, one of the primary rRNA binding proteins, it binds directly near the 3'-end of the 23S rRNA, where it nucleates assembly of the 50S subunit. The protein is Large ribosomal subunit protein uL3 of Buchnera aphidicola subsp. Acyrthosiphon pisum (strain 5A).